The sequence spans 317 residues: MCTGVRFSDDEGNTYFGRNLDWSFSYGETILVTPRGYHYDTVFGAGGKAKPNAVIGVGVVMADRPMYFDCANEHGLAIAGLNFPGYASFVHEPVEGTENVATFEFPLWVARNFDSVDEVEEALRNVTLVSQIVPGQQESLLHWFIGDGKRSIVVEQMADGMHVHHDDVDVLTNQPTFDFHMENLRNYMCVSNEMAEPTSWGKASLTAWGAGVGMHGIPGDVSSPSRFVRVAYTNAHYPQQNDEAANVSRLFHTLGSVQMVDGMAKMGDGQFERTLFTSGYSSKTNTYYMNTYDDPAIRSYAMADYDMDSSELISVAR.

The active-site Nucleophile; acyl-thioester intermediate is Cys-2. The deoxycholate site is built by Cys-2 and Arg-18. Asn-82 serves as a coordination point for taurine.

This sequence belongs to the peptidase C59 family. As to quaternary structure, homotetramer. The tetramer consists of a dimer of dimers.

It carries out the reaction glycocholate + H2O = cholate + glycine. The catalysed reaction is glycodeoxycholate + H2O = deoxycholate + glycine. The enzyme catalyses chenodeoxycholate + glycine = glycochenodeoxycholate + H2O. It catalyses the reaction cholate + taurine = taurocholate + H2O. It carries out the reaction taurodeoxycholate + H2O = deoxycholate + taurine. The catalysed reaction is taurochenodeoxycholate + H2O = chenodeoxycholate + taurine. The enzyme catalyses an L-alpha-amino acid + cholate = an N-choloyl-L-alpha-amino acid + H2O. It catalyses the reaction an L-alpha-amino acid + taurocholate = an N-choloyl-L-alpha-amino acid + taurine. It carries out the reaction cholate + L-alanine = L-alanocholate + H2O. The catalysed reaction is taurocholate + L-alanine = L-alanocholate + taurine. The enzyme catalyses cholate + L-serine = L-serocholate + H2O. It catalyses the reaction taurocholate + L-serine = L-serocholate + taurine. It carries out the reaction cholate + L-histidine = L-histidocholate + H2O. The catalysed reaction is taurocholate + L-histidine = L-histidocholate + taurine. It functions in the pathway lipid metabolism; bile acid biosynthesis. Functionally, possesses dual functions in bile acid metabolism. Acts as a bile salt hydrolase that catalyzes the deconjugation of glycine- and taurine-linked bile salts, which occurs naturally in the intestines of humans, releasing amino acid residues and deconjugated bile salts (bile acids). Can hydrolyze the amide bond in all six major human conjugated bile salts, namely glycocholate (GCA), glycodeoxycholate (GDCA), glycochenodeoxycholate (GCDCA), taurocholate (TCA), taurodeoxycholate (TDCA) and taurochenodeoxycholate (TCDCA). Shows a slight preference for glycine-conjugated bile acids as substrates. Also acts as an amine N-acyltransferase that conjugates a wide variety of amino acids to conjugated and non-conjugated bile acids, thus producing bacterial bile acid amidates (BBAAs) - also named microbially conjugated bile acids (MCBAs) - in the gastrointestinal tract. These BBAAs may facilitate communication between the microbiota and host through the activation of human ligand-activated transcription factors. This Bifidobacterium longum subsp. longum (strain ATCC 15707 / DSM 20219 / JCM 1217 / NCTC 11818 / E194b) protein is Bile salt hydrolase/transferase.